Here is a 279-residue protein sequence, read N- to C-terminus: Syntaxin-21 (279 aa).

A disordered region spans residues 1 to 34 (MSFQDLEAGTRSPAPNRFTGGRQQRPSSRGDPSQ). Residue serine 2 is modified to N-acetylserine. Residues 2–258 (SFQDLEAGTR…AKTQRSNSSL (257 aa)) lie on the Cytoplasmic side of the membrane. Polar residues predominate over residues 21–31 (GRQQRPSSRGD). Positions 65-94 (ELRDKLQKTRLQISELVKNTSAKLKEASEA) form a coiled coil. A t-SNARE coiled-coil homology domain is found at 186–248 (EAIIEEREQG…TQATVQLRKA (63 aa)). The chain crosses the membrane as a helical; Anchor for type IV membrane protein span at residues 259–279 (TCLLILIFGIVLLIVIIVVLV).

It belongs to the syntaxin family. In terms of assembly, interacts with VTI11 and SYP51 to form a t-SNARE complex and with alpha-SNAP to form a 20S complex. As to expression, a high level expression is seen in the roots while a low level expression is seen in the leaves.

The protein localises to the prevacuolar compartment membrane. Its function is as follows. May function in the docking or fusion of transport vesicles with the prevacuolar membrane. This chain is Syntaxin-21 (SYP21), found in Arabidopsis thaliana (Mouse-ear cress).